A 333-amino-acid polypeptide reads, in one-letter code: Nucleoid-associated protein APJL_0454 (333 aa).

Belongs to the YejK family.

The protein resides in the cytoplasm. It is found in the nucleoid. The sequence is that of Nucleoid-associated protein APJL_0454 from Actinobacillus pleuropneumoniae serotype 3 (strain JL03).